Here is a 393-residue protein sequence, read N- to C-terminus: DNA-directed RNA polymerase subunit Rpo1C (393 aa).

This sequence belongs to the RNA polymerase beta' chain family. As to quaternary structure, part of the 13-subunit RNA polymerase complex. Interacts with TFS4.

The protein localises to the cytoplasm. It carries out the reaction RNA(n) + a ribonucleoside 5'-triphosphate = RNA(n+1) + diphosphate. Functionally, DNA-dependent RNA polymerase (RNAP) catalyzes the transcription of DNA into RNA using the four ribonucleoside triphosphates as substrates. Forms part of the jaw domain. Reconstitution experiments show this subunit is required for basic activity. The protein is DNA-directed RNA polymerase subunit Rpo1C of Sulfolobus acidocaldarius (strain ATCC 33909 / DSM 639 / JCM 8929 / NBRC 15157 / NCIMB 11770).